The sequence spans 415 residues: Phosphoribosylamine--glycine ligase (415 aa).

The ATP-grasp domain maps to 108 to 311 (KKIMEKYNIP…LMQHIIDLDE (204 aa)). 134 to 191 (IENCEFPVVVKKDGLAAGKGVIIADTIEAARSAIEIMYGDEEEGTVVFETFLEGEEFS) contributes to the ATP binding site. 2 residues coordinate Mg(2+): Glu-281 and Asn-283.

The protein belongs to the GARS family. It depends on Mg(2+) as a cofactor. Mn(2+) is required as a cofactor.

The catalysed reaction is 5-phospho-beta-D-ribosylamine + glycine + ATP = N(1)-(5-phospho-beta-D-ribosyl)glycinamide + ADP + phosphate + H(+). The protein operates within purine metabolism; IMP biosynthesis via de novo pathway; N(1)-(5-phospho-D-ribosyl)glycinamide from 5-phospho-alpha-D-ribose 1-diphosphate: step 2/2. This Staphylococcus aureus (strain MRSA252) protein is Phosphoribosylamine--glycine ligase.